The following is a 173-amino-acid chain: Probable capsid assembly scaffolding protein (173 aa).

Positions 1-30 (MSDTATTEGTPAGDPTPVVTDKPLEPTPKT) are disordered. Residues 36–56 (VKELRQEAAAARVAKKDAVEA) adopt a coiled-coil conformation.

It belongs to the L5likevirus scaffolding protein family.

Functionally, scaffolding protein involved in the icosahedric procapsid assembly. Coassembles with the capsid proteins to form the procapsid, in which the scaffolding protein is found within the external shell of icosahedrally arranged capsid protein subunits. The chain is Probable capsid assembly scaffolding protein (16) from Mycobacterium (Mycobacteriophage D29).